The chain runs to 217 residues: Ras-like protein (217 aa).

GTP is bound at residue 17–24; the sequence is GGGGVGKS. Residues 39–47 carry the Effector region motif; sequence YDPTIEDSY. GTP is bound by residues 64 to 68 and 123 to 126; these read DTAGQ and NKCD. The disordered stretch occupies residues 181-200; it reads TGRMMTGGGGGGPPGTYAGK. The segment covering 185-194 has biased composition (gly residues); sequence MTGGGGGGPP. S-palmitoyl cysteine attachment occurs at residues C210 and C211. A Cysteine methyl ester modification is found at C214. C214 carries the S-geranylgeranyl cysteine lipid modification. Positions 215–217 are cleaved as a propeptide — removed in mature form; sequence VVL.

The protein belongs to the small GTPase superfamily. Ras family.

The protein localises to the cell membrane. The enzyme catalyses GTP + H2O = GDP + phosphate + H(+). Alternates between an inactive form bound to GDP and an active form bound to GTP. Activated by a guanine nucleotide-exchange factor (GEF) and inactivated by a GTPase-activating protein (GAP). The polypeptide is Ras-like protein (Lentinula edodes (Shiitake mushroom)).